A 293-amino-acid polypeptide reads, in one-letter code: sn-glycerol-3-phosphate transport system permease protein UgpA (293 aa).

Helical transmembrane passes span 10–30, 72–92, 108–128, 155–177, 204–224, and 261–281; these read ILPYFLLAPQIVLTVVFFFWP, VTVVFNVLTALLAMGVALLLA, LLIWPYAVAPAVAGMLWLFMF, AMGLVVVAAAWKQISYNFLFFVA, IVFPLLAPTSFFLLVVNTVYA, and LGSSSAQSVILMAIVIALTAF. In terms of domain architecture, ABC transmembrane type-1 spans 66 to 282; sequence YLHSVQVTVV…AIVIALTAFQ (217 aa).

The protein belongs to the binding-protein-dependent transport system permease family. In terms of assembly, the complex is composed of two ATP-binding proteins (UgpC), two transmembrane proteins (UgpA and UgpE) and a solute-binding protein (UgpB).

It is found in the cell inner membrane. Functionally, part of the ABC transporter complex UgpBAEC involved in sn-glycerol-3-phosphate (G3P) import. Probably responsible for the translocation of the substrate across the membrane. This Brucella suis biovar 1 (strain 1330) protein is sn-glycerol-3-phosphate transport system permease protein UgpA (ugpA).